Consider the following 283-residue polypeptide: Diaminopimelate epimerase (283 aa).

Substrate-binding residues include asparagine 13 and asparagine 65. The active-site Proton donor is cysteine 74. Substrate contacts are provided by residues 75-76 (GN), asparagine 196, and 214-215 (ER). Cysteine 223 functions as the Proton acceptor in the catalytic mechanism. 224 to 225 (GT) is a substrate binding site.

This sequence belongs to the diaminopimelate epimerase family. Homodimer.

Its subcellular location is the cytoplasm. It catalyses the reaction (2S,6S)-2,6-diaminopimelate = meso-2,6-diaminopimelate. It functions in the pathway amino-acid biosynthesis; L-lysine biosynthesis via DAP pathway; DL-2,6-diaminopimelate from LL-2,6-diaminopimelate: step 1/1. In terms of biological role, catalyzes the stereoinversion of LL-2,6-diaminopimelate (L,L-DAP) to meso-diaminopimelate (meso-DAP), a precursor of L-lysine and an essential component of the bacterial peptidoglycan. The sequence is that of Diaminopimelate epimerase from Alkaliphilus metalliredigens (strain QYMF).